An 86-amino-acid chain; its full sequence is MRTTLTLDDDVVRLVEDAVHRERRPMKQVINDALRRALAPPVKRQEQYRLEPHESAVRSGLDLAGFNKLADELEDEALLDATRRAR.

Functionally, antitoxin component of a type II toxin-antitoxin (TA) system. Upon expression in M.smegmatis neutralizes the effect of cognate toxin VapC33. The sequence is that of Antitoxin VapB33 (vapB33) from Mycobacterium tuberculosis (strain ATCC 25618 / H37Rv).